We begin with the raw amino-acid sequence, 697 residues long: Ribosomal RNA large subunit methyltransferase K/L (697 aa).

The THUMP domain occupies 43-154 (ILYNSLMWSR…QNLVHIMLDL (112 aa)).

It belongs to the methyltransferase superfamily. RlmKL family.

The protein localises to the cytoplasm. It catalyses the reaction guanosine(2445) in 23S rRNA + S-adenosyl-L-methionine = N(2)-methylguanosine(2445) in 23S rRNA + S-adenosyl-L-homocysteine + H(+). It carries out the reaction guanosine(2069) in 23S rRNA + S-adenosyl-L-methionine = N(2)-methylguanosine(2069) in 23S rRNA + S-adenosyl-L-homocysteine + H(+). Its function is as follows. Specifically methylates the guanine in position 2445 (m2G2445) and the guanine in position 2069 (m7G2069) of 23S rRNA. The polypeptide is Ribosomal RNA large subunit methyltransferase K/L (Buchnera aphidicola subsp. Schizaphis graminum (strain Sg)).